We begin with the raw amino-acid sequence, 89 residues long: Small ribosomal subunit protein uS15 (89 aa).

It belongs to the universal ribosomal protein uS15 family. Part of the 30S ribosomal subunit. Forms a bridge to the 50S subunit in the 70S ribosome, contacting the 23S rRNA.

Functionally, one of the primary rRNA binding proteins, it binds directly to 16S rRNA where it helps nucleate assembly of the platform of the 30S subunit by binding and bridging several RNA helices of the 16S rRNA. In terms of biological role, forms an intersubunit bridge (bridge B4) with the 23S rRNA of the 50S subunit in the ribosome. The polypeptide is Small ribosomal subunit protein uS15 (Yersinia pseudotuberculosis serotype O:1b (strain IP 31758)).